The following is a 585-amino-acid chain: Switch-associated protein 70 (585 aa).

Residues 210–306 (DVLKQGYMIK…WIQAIHSTIH (97 aa)) form the PH domain. Residues 316–532 (HKEARQRRKE…KLEMAAKMTK (217 aa)) adopt a coiled-coil conformation.

As to quaternary structure, the SWAP complex consists of NPM1, NCL, PARP1 and SWAP70. In terms of processing, tyrosine-phosphorylated.

It is found in the cytoplasm. Its subcellular location is the cell membrane. The protein localises to the nucleus. It localises to the cell projection. The protein resides in the lamellipodium. In terms of biological role, phosphatidylinositol 3,4,5-trisphosphate-dependent guanine nucleotide exchange factor (GEF) which, independently of RAS, transduces signals from tyrosine kinase receptors to RAC. It also mediates signaling of membrane ruffling. Regulates the actin cytoskeleton as an effector or adapter protein in response to agonist stimulated phosphatidylinositol (3,4)-bisphosphate production and cell protrusion. The polypeptide is Switch-associated protein 70 (SWAP70) (Bos taurus (Bovine)).